Here is a 1398-residue protein sequence, read N- to C-terminus: Pyrolysin (1398 aa).

The N-terminal stretch at 1–26 (MNKKGLTVLFIAIMLLSVVPVHFVSA) is a signal peptide. Positions 27 to 149 (GTPPVSSENS…KTKEPSLEPK (123 aa)) are excised as a propeptide. An N-linked (GlcNAc...) asparagine glycan is attached at N152. The 503-residue stretch at 154–656 (TWVINALQFI…HGLVNVTKSW (503 aa)) folds into the Peptidase S8 domain. The active-site Charge relay system is D179. 7 N-linked (GlcNAc...) asparagine glycosylation sites follow: N222, N228, N240, N257, N262, N298, and N327. H365 (charge relay system) is an active-site residue. N406 carries an N-linked (GlcNAc...) asparagine glycan. Residue S590 is the Charge relay system of the active site. Residues N651, N663, N739, N792, N893, N908, N917, N929, N1048, N1056, N1084, N1117, N1133, N1140, N1148, N1208, N1233, N1237, and N1332 are each glycosylated (N-linked (GlcNAc...) asparagine).

This sequence belongs to the peptidase S8 family. Post-translationally, LWM pyrolysin seems to be produced by autoproteolytic activation of HMW pyrolysin. In terms of processing, glycosylated.

It is found in the cell envelope. Has endopeptidase activity toward caseins, casein fragments including alpha-S1-casein and synthetic peptides. The sequence is that of Pyrolysin (pls) from Pyrococcus furiosus (strain ATCC 43587 / DSM 3638 / JCM 8422 / Vc1).